A 639-amino-acid polypeptide reads, in one-letter code: Polypeptide N-acetylgalactosaminyltransferase 15 (639 aa).

Topologically, residues Met1–Pro11 are cytoplasmic. The chain crosses the membrane as a helical; Signal-anchor for type II membrane protein span at residues Cys12 to His34. The Lumenal segment spans residues Pro35–Arg639. The interval Arg106–Asp155 is disordered. Asn107 carries N-linked (GlcNAc...) asparagine glycosylation. A compositionally biased stretch (basic and acidic residues) spans Arg124–Gly136. Positions Ala137 to Leu149 are enriched in acidic residues. 5 disulfides stabilise this stretch: Cys181–Cys412, Cys403–Cys482, Cys517–Cys536, Cys562–Cys575, and Cys603–Cys620. The interval Leu190–Arg299 is catalytic subdomain A. The substrate site is built by Asp231 and Arg260. Residues Asp283, His285, and His417 each coordinate Mn(2+). Residues Pro358–Gln420 are catalytic subdomain B. Residues Ser504–Asp631 enclose the Ricin B-type lectin domain. N-linked (GlcNAc...) asparagine glycosylation occurs at Asn574.

Belongs to the glycosyltransferase 2 family. GalNAc-T subfamily. It depends on Mn(2+) as a cofactor. Widely expressed. Highly expressed in small intestine, placenta, spleen, cerebral cortex and ovary. Expressed at intermediate level in uterus, mammary gland, stomach, cerebellum and whole brain. Weakly expressed in fetal brain, bone marrow, thyroid gland, thymus, heart, skeletal muscle, lung, liver, colon, pancreas, kidney and testis. Not expressed in leukocyte. Expressed in both normal and osteoarthritic cartilage. Expressed at low level in chondrocytes in all zones of both normal and osteoarthritic cartilage.

The protein localises to the golgi apparatus membrane. The enzyme catalyses L-seryl-[protein] + UDP-N-acetyl-alpha-D-galactosamine = a 3-O-[N-acetyl-alpha-D-galactosaminyl]-L-seryl-[protein] + UDP + H(+). It carries out the reaction L-threonyl-[protein] + UDP-N-acetyl-alpha-D-galactosamine = a 3-O-[N-acetyl-alpha-D-galactosaminyl]-L-threonyl-[protein] + UDP + H(+). It functions in the pathway protein modification; protein glycosylation. Catalyzes the initial reaction in O-linked oligosaccharide biosynthesis, the transfer of an N-acetyl-D-galactosamine residue to a serine or threonine residue on the protein receptor. Although it displays a much weaker activity toward all substrates tested compared to GALNT2, it is able to transfer up to seven GalNAc residues to the Muc5AC peptide, suggesting that it can fill vicinal Thr/Ser residues in cooperation with other GALNT proteins. Prefers Muc1a as substrate. In Homo sapiens (Human), this protein is Polypeptide N-acetylgalactosaminyltransferase 15 (GALNT15).